The chain runs to 108 residues: uncharacterized protein (108 aa).

The span at 1–14 (MSDSNSRLVYSTET) shows a compositional bias: polar residues. Residues 1–31 (MSDSNSRLVYSTETGRIDEPKAAPVRPKGDG) form a disordered region. A compositionally biased stretch (basic and acidic residues) spans 15 to 31 (GRIDEPKAAPVRPKGDG).

The protein belongs to the SUI1 family.

This is an uncharacterized protein from Escherichia coli (strain K12).